Consider the following 204-residue polypeptide: MIGRLRGILLEKQPPEVLIEVNGIGYEVQMPMSCFYELPNIGEEAIIYTHFVVREDAQLLYGFNTVKERALFREVIKANGVGPKLGLGILSGMTASQFVSCVEREDVSTLVKLPGVGKKTAERLVVEMKDRLKGWGAGDLFTPFTDAAPTDSAAASSNSAEEEAVSALLALGYKPTQASKVVSQIAKPDMSSEQLIREALKSMV.

The domain I stretch occupies residues 1 to 64 (MIGRLRGILL…EDAQLLYGFN (64 aa)). A domain II region spans residues 65-143 (TVKERALFRE…GWGAGDLFTP (79 aa)). The interval 144 to 155 (FTDAAPTDSAAA) is flexible linker. A domain III region spans residues 156–204 (SSNSAEEEAVSALLALGYKPTQASKVVSQIAKPDMSSEQLIREALKSMV).

The protein belongs to the RuvA family. As to quaternary structure, homotetramer. Forms an RuvA(8)-RuvB(12)-Holliday junction (HJ) complex. HJ DNA is sandwiched between 2 RuvA tetramers; dsDNA enters through RuvA and exits via RuvB. An RuvB hexamer assembles on each DNA strand where it exits the tetramer. Each RuvB hexamer is contacted by two RuvA subunits (via domain III) on 2 adjacent RuvB subunits; this complex drives branch migration. In the full resolvosome a probable DNA-RuvA(4)-RuvB(12)-RuvC(2) complex forms which resolves the HJ.

The protein resides in the cytoplasm. Its function is as follows. The RuvA-RuvB-RuvC complex processes Holliday junction (HJ) DNA during genetic recombination and DNA repair, while the RuvA-RuvB complex plays an important role in the rescue of blocked DNA replication forks via replication fork reversal (RFR). RuvA specifically binds to HJ cruciform DNA, conferring on it an open structure. The RuvB hexamer acts as an ATP-dependent pump, pulling dsDNA into and through the RuvAB complex. HJ branch migration allows RuvC to scan DNA until it finds its consensus sequence, where it cleaves and resolves the cruciform DNA. This chain is Holliday junction branch migration complex subunit RuvA, found in Vibrio parahaemolyticus serotype O3:K6 (strain RIMD 2210633).